The chain runs to 918 residues: Hexokinase-1 (918 aa).

An N-acetylmethionine modification is found at M1. A mitochondrial-binding peptide (MBP) region spans residues 1 to 10 (MIAAQLLAYY). 2 consecutive Hexokinase domains span residues 16–458 (DDQV…MVTA) and 464–906 (AEQH…LITA). ATP contacts are provided by residues R30 and 84 to 89 (DLGGSS). A hexokinase small subdomain 1 region spans residues 73-207 (DGSEKGDFIA…DYDANIVAVV (135 aa)). A D-glucose 6-phosphate-binding site is contributed by 84-88 (DLGGS). Residues S155, 172 to 173 (TK), and 208 to 209 (ND) contribute to the D-glucose site. Residues 208–447 (NDTVGTMMTC…SDVRFLLSES (240 aa)) are hexokinase large subdomain 1. D-glucose 6-phosphate-binding residues include D209 and T232. D-glucose-binding positions include N235, E260, and 291–294 (QLFE). Position 337 is a phosphoserine (S337). D-glucose 6-phosphate is bound at residue 413-415 (DGS). 425–426 (RR) provides a ligand contact to ATP. D-glucose 6-phosphate is bound by residues T449, 532–536 (DLGGT), and S603. A hexokinase small subdomain 2 region spans residues 521-655 (DGTEHGDFLA…EFDLDVVAVV (135 aa)). 532-537 (DLGGTN) is a binding site for ATP. D-glucose is bound by residues 620–621 (TK) and 656–657 (ND). The hexokinase large subdomain 2 stretch occupies residues 656-895 (NDTVGTMMTC…CTVSFLLSED (240 aa)). D657 and T680 together coordinate D-glucose 6-phosphate. T680 provides a ligand contact to ATP. D-glucose is bound by residues N683, E708, and E742. ATP-binding positions include 747-748 (GM), 784-788 (TKFLS), and 863-867 (TLYKL). D-glucose 6-phosphate-binding positions include 861-863 (DGT) and S897.

It belongs to the hexokinase family. Monomer. Interacts with RABL2/RABL2A; binds preferentially to GTP-bound RABL2. Interacts with VDAC1. The HK1-VDAC1 complex interacts with ATF2. Interacts (via N-terminal spermatogenic cell-specific region) with PFKM (via C-terminus). Interacts with SMAD5. Expressed in flagella of epididymal sperm.

It is found in the mitochondrion outer membrane. The protein resides in the cytoplasm. The protein localises to the cytosol. The catalysed reaction is a D-hexose + ATP = a D-hexose 6-phosphate + ADP + H(+). The enzyme catalyses D-fructose + ATP = D-fructose 6-phosphate + ADP + H(+). It catalyses the reaction D-glucose + ATP = D-glucose 6-phosphate + ADP + H(+). It carries out the reaction D-mannose + ATP = D-mannose 6-phosphate + ADP + H(+). The catalysed reaction is D-glucosamine + ATP = D-glucosamine 6-phosphate + ADP + H(+). Its pathway is carbohydrate metabolism; hexose metabolism. It functions in the pathway carbohydrate degradation; glycolysis; D-glyceraldehyde 3-phosphate and glycerone phosphate from D-glucose: step 1/4. Hexokinase is an allosteric enzyme inhibited by its product D-glucose 6-phosphate. Hexokinase activity is inhibited by N-acetyl-D-glucosamine. In terms of biological role, catalyzes the phosphorylation of various hexoses, such as D-glucose, D-glucosamine, D-fructose, D-mannose and 2-deoxy-D-glucose, to hexose 6-phosphate (D-glucose 6-phosphate, D-glucosamine 6-phosphate, D-fructose 6-phosphate, D-mannose 6-phosphate and 2-deoxy-D-glucose 6-phosphate, respectively). Mediates the initial step of glycolysis by catalyzing phosphorylation of D-glucose to D-glucose 6-phosphate. Involved in innate immunity and inflammation by acting as a pattern recognition receptor for bacterial peptidoglycan. When released in the cytosol, N-acetyl-D-glucosamine component of bacterial peptidoglycan inhibits the hexokinase activity of HK1 and causes its dissociation from mitochondrial outer membrane, thereby activating the NLRP3 inflammasome. This chain is Hexokinase-1, found in Rattus norvegicus (Rat).